The chain runs to 1221 residues: DNA-directed RNA polymerase subunit beta (1221 aa).

Residues 1176–1221 (EKKKLAEEEAEIAAEAEAEGSAEGDAAEADADANEAETADDDKASK) form a disordered region. Over residues 1183–1215 (EEAEIAAEAEAEGSAEGDAAEADADANEAETAD) the composition is skewed to acidic residues.

It belongs to the RNA polymerase beta chain family. In terms of assembly, the RNAP catalytic core consists of 2 alpha, 1 beta, 1 beta' and 1 omega subunit. When a sigma factor is associated with the core the holoenzyme is formed, which can initiate transcription.

It catalyses the reaction RNA(n) + a ribonucleoside 5'-triphosphate = RNA(n+1) + diphosphate. Its function is as follows. DNA-dependent RNA polymerase catalyzes the transcription of DNA into RNA using the four ribonucleoside triphosphates as substrates. The protein is DNA-directed RNA polymerase subunit beta of Lactobacillus delbrueckii subsp. bulgaricus (strain ATCC 11842 / DSM 20081 / BCRC 10696 / JCM 1002 / NBRC 13953 / NCIMB 11778 / NCTC 12712 / WDCM 00102 / Lb 14).